A 515-amino-acid chain; its full sequence is 2-isopropylmalate synthase (515 aa).

Residues 5–268 enclose the Pyruvate carboxyltransferase domain; the sequence is VIIFDTTLRD…VCGIDATQIV (264 aa). The Mn(2+) site is built by Asp14, His202, His204, and Asn239. Residues 394 to 515 form a regulatory domain region; that stretch reads KFISLSQHSE…QAKLNAQMTP (122 aa).

The protein belongs to the alpha-IPM synthase/homocitrate synthase family. LeuA type 1 subfamily. Homodimer. It depends on Mn(2+) as a cofactor.

Its subcellular location is the cytoplasm. It catalyses the reaction 3-methyl-2-oxobutanoate + acetyl-CoA + H2O = (2S)-2-isopropylmalate + CoA + H(+). Its pathway is amino-acid biosynthesis; L-leucine biosynthesis; L-leucine from 3-methyl-2-oxobutanoate: step 1/4. Its function is as follows. Catalyzes the condensation of the acetyl group of acetyl-CoA with 3-methyl-2-oxobutanoate (2-ketoisovalerate) to form 3-carboxy-3-hydroxy-4-methylpentanoate (2-isopropylmalate). The chain is 2-isopropylmalate synthase from Polynucleobacter necessarius subsp. necessarius (strain STIR1).